Reading from the N-terminus, the 699-residue chain is Lutropin-choriogonadotropic hormone receptor (699 aa).

The N-terminal stretch at 1-26 is a signal peptide; the sequence is MKQRFSALQLLKLLLLLQPPLPRALR. The 40-residue stretch at 27–66 folds into the LRRNT domain; it reads EALCPEPCNCVPDGALRCPGPTAGLTRLSLAYLPVKVIPS. Topologically, residues 27–363 are extracellular; sequence EALCPEPCNC…EDIMGYDFLR (337 aa). 3 LRR repeats span residues 96 to 115, 124 to 145, and 149 to 171; these read NLLN…RYIE, RLKY…TKVF, and SNFI…AFQG. Asparagine 99 carries N-linked (GlcNAc...) asparagine glycosylation. N-linked (GlcNAc...) asparagine glycosylation is found at asparagine 174 and asparagine 195. 3 LRR repeats span residues 175 to 196, 198 to 220, and 223 to 244; these read ESVT…AFNG, TLTS…AFRG, and GPKT…GLES. N-linked (GlcNAc...) asparagine glycosylation is found at asparagine 291, asparagine 299, and asparagine 313. A Sulfotyrosine modification is found at tyrosine 331. The chain crosses the membrane as a helical span at residues 364–385; it reads VLIWLINILAIMGNMTVLFVLL. Residues 386–395 lie on the Cytoplasmic side of the membrane; it reads TSRYKLTVPR. A helical membrane pass occupies residues 396–416; it reads FLMCNLSFADFCMGLYLLLIA. Residues 417-439 are Extracellular-facing; that stretch reads SVDSQTKGQYYNHAIDWQTGSGC. The cysteines at positions 439 and 514 are disulfide-linked. A helical membrane pass occupies residues 440–462; sequence STAGFFTVFASELSVYTLTVITL. Over 463–482 the chain is Cytoplasmic; it reads ERWHTITYAIHLDQKLRLRH. Residues 483 to 505 traverse the membrane as a helical segment; that stretch reads AILIMLGGWLFSSLIAMLPLVGV. Topologically, residues 506–525 are extracellular; that stretch reads SNYMKVSICFPMDVETTLSQ. The helical transmembrane segment at 526–549 threads the bilayer; the sequence is VYILTILILNVVAFFIICACYIKI. Topologically, residues 550-570 are cytoplasmic; the sequence is YFAVRNPELMATNKDTKIAKK. Residues 571-594 form a helical membrane-spanning segment; it reads MAILIFTDFTCMAPISFFAISAAF. Over 595-605 the chain is Extracellular; sequence KVPLITVTNSK. Residues 606 to 627 form a helical membrane-spanning segment; the sequence is VLLVLFYPINSCANPFLYAIFT. Topologically, residues 628 to 699 are cytoplasmic; the sequence is KTFQRDFFLL…LLDKTRYTEC (72 aa). 2 S-palmitoyl cysteine lipidation sites follow: cysteine 643 and cysteine 644.

This sequence belongs to the G-protein coupled receptor 1 family. FSH/LSH/TSH subfamily. Sulfated. Gonadal and thyroid cells.

The protein localises to the cell membrane. Functionally, receptor for lutropin-choriogonadotropic hormone. The activity of this receptor is mediated by G proteins which activate adenylate cyclase. This is Lutropin-choriogonadotropic hormone receptor (LHCGR) from Homo sapiens (Human).